The following is a 312-amino-acid chain: tRNA dimethylallyltransferase (312 aa).

An ATP-binding site is contributed by 14–21; the sequence is GPTASGKS. 16–21 lines the substrate pocket; sequence TASGKS. 2 interaction with substrate tRNA regions span residues 39–42 and 163–167; these read DSSL and QRLQR.

The protein belongs to the IPP transferase family. In terms of assembly, monomer. Requires Mg(2+) as cofactor.

It catalyses the reaction adenosine(37) in tRNA + dimethylallyl diphosphate = N(6)-dimethylallyladenosine(37) in tRNA + diphosphate. Catalyzes the transfer of a dimethylallyl group onto the adenine at position 37 in tRNAs that read codons beginning with uridine, leading to the formation of N6-(dimethylallyl)adenosine (i(6)A). In Methylococcus capsulatus (strain ATCC 33009 / NCIMB 11132 / Bath), this protein is tRNA dimethylallyltransferase.